The chain runs to 698 residues: Pentatricopeptide repeat-containing protein 1, mitochondrial (698 aa).

The interval 49 to 88 is disordered; the sequence is SSSQLPLGQERQENTGSLGSDPSHSNSTATQEEDEEESFG. Over residues 62-78 the composition is skewed to polar residues; that stretch reads NTGSLGSDPSHSNSTAT. PPR repeat units lie at residues 133-169, 170-204, 205-243, 244-278, 279-315, and 316-352; these read TPYW…RLQP, MESN…DLEP, SDAT…NFEL, NLKT…GHVV, TEET…GLQP, and SRDS…ATVL. Positions 392-419 are disordered; the sequence is QALGPPEPPEARVPSKAQPEVDTKAEPS. PPR repeat units lie at residues 517-551, 552-583, and 584-618; these read DLTF…GLVP, NLQT…QVTP, and NSHI…RVPV. The disordered stretch occupies residues 670-698; it reads HPWQKFRTKPQEDQDTRKEADDGCALGGR. Residues 678–690 show a composition bias toward basic and acidic residues; sequence KPQEDQDTRKEAD.

This sequence belongs to the PTCD1 family. Associates with mitochondrial leucine tRNAs. Interacts with ELAC2.

It localises to the mitochondrion. It is found in the mitochondrion matrix. Its function is as follows. Mitochondrial protein implicated in negative regulation of leucine tRNA levels, as well as negative regulation of mitochondria-encoded proteins and COX activity. Also affects the 3'-processing of mitochondrial tRNAs. The polypeptide is Pentatricopeptide repeat-containing protein 1, mitochondrial (PTCD1) (Pongo abelii (Sumatran orangutan)).